The primary structure comprises 428 residues: Adenylosuccinate synthetase (428 aa).

GTP is bound by residues 12-18 (GDEGKGK) and 40-42 (GHT). The Proton acceptor role is filled by aspartate 13. Mg(2+)-binding residues include aspartate 13 and glycine 40. Residues 13 to 16 (DEGK), 38 to 41 (NAGH), threonine 130, arginine 144, glutamine 225, threonine 240, and arginine 304 contribute to the IMP site. Histidine 41 (proton donor) is an active-site residue. 300 to 306 (VTTGRAR) serves as a coordination point for substrate. GTP contacts are provided by residues arginine 306, 332 to 334 (KID), and 414 to 416 (SVG).

It belongs to the adenylosuccinate synthetase family. In terms of assembly, homodimer. The cofactor is Mg(2+).

Its subcellular location is the cytoplasm. The enzyme catalyses IMP + L-aspartate + GTP = N(6)-(1,2-dicarboxyethyl)-AMP + GDP + phosphate + 2 H(+). It functions in the pathway purine metabolism; AMP biosynthesis via de novo pathway; AMP from IMP: step 1/2. Its function is as follows. Plays an important role in the de novo pathway of purine nucleotide biosynthesis. Catalyzes the first committed step in the biosynthesis of AMP from IMP. The chain is Adenylosuccinate synthetase from Clostridium botulinum (strain ATCC 19397 / Type A).